A 259-amino-acid chain; its full sequence is HTH-type quorum sensing-dependent transcriptional regulator VjbR (259 aa).

The segment at 76-179 (KNYFAIDPVF…AGIIHGTVCG (104 aa)) is C12-HSL binding. An HTH luxR-type domain is found at 183-248 (ANSVASLLTP…SAVATALSLG (66 aa)). The H-T-H motif DNA-binding region spans 207 to 226 (DGEIAEILSIARWTVVTYLQ).

In terms of biological role, transcriptional regulator involved in the global control of Brucella gene expression. Mediates the effects of the quorum sensing autoinducer C12-HSL (N-dodecanoyl-homoserine lactone) on a large and diverse number of genes. This chain is HTH-type quorum sensing-dependent transcriptional regulator VjbR (vjbR), found in Brucella ovis (strain ATCC 25840 / 63/290 / NCTC 10512).